A 1450-amino-acid chain; its full sequence is Collagen alpha-1(I) chain (1450 aa).

Positions 1 to 22 are cleaved as a signal peptide; it reads MFSFVDNRLLVLLAACVLLVRA. Residues 23–148 constitute a propeptide, N-terminal propeptide; that stretch reads LDQEDIESGL…PPGLGGNFAP (126 aa). Residues 31 to 90 enclose the VWFC domain; that stretch reads GLCHQEGTTYSDKDVWKPEPCVICVCDNGNIMCDDVTCGDYPVDCPNAEIPFGECCPVCP. Residues 97–1201 form a disordered region; sequence YSEQTGVEGP…EPKSHGDGRY (1105 aa). Over residues 106–116 the composition is skewed to basic and acidic residues; it reads PKGEVGPKGDR. Over residues 130 to 140 the composition is skewed to pro residues; sequence LPGPPGPPGPP. At glutamine 149 the chain carries Pyrrolidone carboxylic acid. Residue lysine 157 is modified to Allysine. Over residues 166–181 the composition is skewed to pro residues; the sequence is PMGPMGPRGPPGPSGS. 4-hydroxyproline is present on residues proline 176, proline 182, proline 194, proline 197, proline 212, proline 227, proline 242, and proline 248. Over residues 182-206 the composition is skewed to low complexity; the sequence is PGPQGFQGPSGEPGEPGAAGALGPR. Over residues 215–229 the composition is skewed to basic and acidic residues; the sequence is NGDDGESGKPGRPGE. Residue lysine 251 is modified to 5-hydroxylysine; alternate. Residue lysine 251 is glycosylated (O-linked (Gal...) hydroxylysine; alternate). Residues 266 to 292 show a composition bias toward low complexity; the sequence is NGPAGPKGEPGNPGENGAPGQAGPRGL. 4-hydroxyproline occurs at positions 275, 278, 284, 293, 299, 314, 320, 329, 332, 359, 362, 374, 380, 389, 395, 398, and 413. Over residues 317–331 the composition is skewed to pro residues; it reads AGPPGPTGPTGPPGF. Residues 352 to 374 show a composition bias toward low complexity; the sequence is PQGARGEPGAPGPAGAAGPSGNP. Residues 378–387 show a composition bias toward gly residues; it reads GQPGGKGATG. Residues 388 to 443 are compositionally biased toward low complexity; that stretch reads SPGIAGAPGFPGARGAPGPQGPAGAPGPKGNNGEPGAQGNKGEPGAKGEPGPAGVQ. A 5-hydroxylysine modification is found at lysine 416. Proline 422, proline 437, proline 446, proline 461, proline 467, proline 476, and proline 482 each carry 4-hydroxyproline. Positions 471 to 480 are enriched in gly residues; it reads GERGGPGSRG. The residue at position 491 (lysine 491) is a 5-hydroxylysine. 4-hydroxyproline occurs at positions 494, 515, 521, 530, 533, 551, 569, 578, 590, 608, 626, 632, 644, 650, 656, and 668. Low complexity-rich tracts occupy residues 568–578 and 586–596; these read FPGPKGAAGEP and VAGPPGATGAP. The span at 637-650 shows a compositional bias: low complexity; the sequence is PAGEAGKPGEQGAP. The segment covering 669–678 has biased composition (gly residues); the sequence is GERGGQGPAG. The span at 679–701 shows a compositional bias: low complexity; the sequence is AQGPRGSPGSPGNDGAKGEAGAA. 5 positions are modified to 4-hydroxyproline: proline 689, proline 704, proline 710, proline 716, and proline 725. Gly residues predominate over residues 702–711; sequence GAPGGRGPPG. Lysine 737 bears the 5-hydroxylysine mark. A 4-hydroxyproline mark is found at proline 743, proline 758, proline 764, proline 785, proline 791, proline 794, proline 803, proline 809, proline 827, proline 836, and proline 845. The segment covering 796 to 806 has biased composition (low complexity); that stretch reads PAGICGPPGAD. Residues 817-869 are compositionally biased toward low complexity; the sequence is DAGPKGDAGAPGPAGPTGAPGPAGNVGAPGPKGTRGAAGPPGATGFPGAAGRL. Lysine 848 carries the 5-hydroxylysine modification. 4-hydroxyproline occurs at positions 857 and 863. At proline 871 the chain carries 3-hydroxyproline. A 4-hydroxyproline mark is found at proline 872, proline 881, proline 884, proline 908, proline 914, proline 923, proline 932, proline 950, proline 962, proline 968, proline 983, proline 989, proline 995, proline 1004, and proline 1010. Residues 917–943 are compositionally biased toward low complexity; it reads SGEKGSPGSDGPAGAPGIPGPQGIAGQ. Positions 982–997 are enriched in pro residues; it reads PPGPSGPPGLGGPPGE. Lysine 1019 carries the post-translational modification 5-hydroxylysine. Residues 1028–1043 show a composition bias toward pro residues; that stretch reads SGPPGAPGAPGAPGPV. A 4-hydroxyproline mark is found at proline 1031, proline 1034, and proline 1037. Positions 1064–1078 are enriched in low complexity; it reads AGPSGVRGAPGPAGA. A compositionally biased stretch (basic and acidic residues) spans 1079 to 1093; the sequence is RGDKGEAGEQGERGM. Residue lysine 1082 is modified to 5-hydroxylysine. A 5-hydroxylysine; alternate modification is found at lysine 1094. Lysine 1094 is a glycosylation site (O-linked (Gal...) hydroxylysine; alternate). 4-hydroxyproline occurs at positions 1106 and 1109. Over residues 1120-1129 the composition is skewed to pro residues; that stretch reads PSGPAGPRGP. 4-hydroxyproline is present on residues proline 1130 and proline 1145. A compositionally biased stretch (low complexity) spans 1130–1145; that stretch reads PGSSGSTGKDGVNGLP. Proline 1150 is modified (3-hydroxyproline). A 4-hydroxyproline modification is found at proline 1151. Positions 1163-1178 are enriched in pro residues; that stretch reads AGPPGPPGPPGPPGPP. 3-hydroxyproline is present on proline 1165. At proline 1166 the chain carries 4-hydroxyproline. A 3-hydroxyproline modification is found at proline 1168. At proline 1169 the chain carries 4-hydroxyproline. Proline 1171 carries the 3-hydroxyproline modification. 4-hydroxyproline is present on residues proline 1172, proline 1175, and proline 1178. Lysine 1194 carries the post-translational modification Allysine. Residues 1205–1450 constitute a propeptide, C-terminal propeptide; it reads DDANVVRDRD…GIDIGPVCFL (246 aa). Positions 1215–1450 constitute a Fibrillar collagen NC1 domain; sequence LEVDTTLKSL…GIDIGPVCFL (236 aa). 3 disulfides stabilise this stretch: cysteine 1245–cysteine 1277, cysteine 1285–cysteine 1448, and cysteine 1356–cysteine 1401. 5 residues coordinate Ca(2+): aspartate 1263, asparagine 1265, glutamine 1266, cysteine 1268, and aspartate 1271. Asparagine 1351 carries an N-linked (GlcNAc...) asparagine glycan.

Belongs to the fibrillar collagen family. As to quaternary structure, trimers of one alpha 2(I) and two alpha 1(I) chains. Contains mostly 4-hydroxyproline. Proline residues at the third position of the tripeptide repeating unit (G-X-Y) are hydroxylated in some or all of the chains. Post-translationally, contains 3-hydroxyproline at a few sites. This modification occurs on the first proline residue in the sequence motif Gly-Pro-Hyp, where Hyp is 4-hydroxyproline. In terms of processing, lysine residues at the third position of the tripeptide repeating unit (G-X-Y) are 5-hydroxylated in some or all of the chains. O-glycosylated on hydroxylated lysine residues. The O-linked glycan consists of a Glc-Gal disaccharide.

It is found in the secreted. The protein resides in the extracellular space. The protein localises to the extracellular matrix. Type I collagen is a member of group I collagen (fibrillar forming collagen). The polypeptide is Collagen alpha-1(I) chain (COL1A1) (Cynops pyrrhogaster (Japanese fire-bellied newt)).